A 208-amino-acid chain; its full sequence is Uracil phosphoribosyltransferase (208 aa).

Residues arginine 78, arginine 103, and 130-138 (DPMLATGGS) each bind 5-phospho-alpha-D-ribose 1-diphosphate. Residues isoleucine 193 and 198–200 (GDA) each bind uracil. Position 199 (aspartate 199) interacts with 5-phospho-alpha-D-ribose 1-diphosphate.

It belongs to the UPRTase family. Requires Mg(2+) as cofactor.

The catalysed reaction is UMP + diphosphate = 5-phospho-alpha-D-ribose 1-diphosphate + uracil. It functions in the pathway pyrimidine metabolism; UMP biosynthesis via salvage pathway; UMP from uracil: step 1/1. Its activity is regulated as follows. Allosterically activated by GTP. Catalyzes the conversion of uracil and 5-phospho-alpha-D-ribose 1-diphosphate (PRPP) to UMP and diphosphate. In Shewanella halifaxensis (strain HAW-EB4), this protein is Uracil phosphoribosyltransferase.